Consider the following 122-residue polypeptide: Large ribosomal subunit protein uL14 (122 aa).

It belongs to the universal ribosomal protein uL14 family. In terms of assembly, part of the 50S ribosomal subunit. Forms a cluster with proteins L3 and L19. In the 70S ribosome, L14 and L19 interact and together make contacts with the 16S rRNA in bridges B5 and B8.

In terms of biological role, binds to 23S rRNA. Forms part of two intersubunit bridges in the 70S ribosome. In Paracidovorax citrulli (strain AAC00-1) (Acidovorax citrulli), this protein is Large ribosomal subunit protein uL14.